Reading from the N-terminus, the 130-residue chain is Small ribosomal subunit protein uS8 (130 aa).

It belongs to the universal ribosomal protein uS8 family. Part of the 30S ribosomal subunit. Contacts proteins S5 and S12.

One of the primary rRNA binding proteins, it binds directly to 16S rRNA central domain where it helps coordinate assembly of the platform of the 30S subunit. This is Small ribosomal subunit protein uS8 from Phytoplasma australiense.